Here is a 770-residue protein sequence, read N- to C-terminus: MNANQAAESNLLASNQQKELEDLPKDYPLSTSEDEGDKDEERKHQKLLESISSLNGKDRQKLADRSEASLKVSEFSVSSEGSGEKLVLSDLLEPVKTSSSLAAVKKQLNRVKSKKTVELPLHREEIERIHREVAFNKSSQILSKWDPVVLKNRQAEQLVFPLSKPQSAFAPIEHVVNGWKAGTPLEQEIFNLLHKNKQPVTDPLLTPVEKASLKAMSLEEVKMRRAELQRARALQSYYEARARREKRIKSKKYHRILKKGKAKQALKDFEKLQKVNPAAALEELEKLDKARMMERMSLKHQNSGKWAKSKAIMAKYDLEARQAMQEQLARNKELTQKVRAASESEEEGEGQEEEEEPLVPDLVNEVQIKANGLNPWMFRNHFIDAKEAEVQKDLEDPAEPEAQETSESEEEKAVVEEETLLKEFEERRSLRQKSELNHMAEPVHRRVTKDPSSQEVLSDLRALCQKLRTENHQSGKQELSSARTAQREEPAREEEEPMLLQRPERARTLDELEELGREGCVENEELPRTAVEGLQLEKNLSNHIGAPKEKKRKEQMIDLQNLLTTKSPSVKSLAVPTTVQELEDEEERDQRQIIKEAFAGDDVIRDFLKEKREAVEASKPKDLDLTLPGWGEWGGIGLKPSAKKRRRFLIKAPEGPPRKDKNLPNVIINEKRNTHAAAHQVQVLPHPFTHHQQFERTIQTPVGSTWNTQRAFQKLTMPKVVTKPGHIIKPIKAEDVGYRSSSRSDLSVVQRNPKRLSIRHKKHLENNCVD.

The segment covering 1-17 (MNANQAAESNLLASNQQ) has biased composition (polar residues). Positions 1–65 (MNANQAAESN…GKDRQKLADR (65 aa)) are disordered. Serine 30, serine 32, and serine 53 each carry phosphoserine. Residues 41–68 (ERKHQKLLESISSLNGKDRQKLADRSEA) adopt a coiled-coil conformation. The span at 56 to 65 (GKDRQKLADR) shows a compositional bias: basic and acidic residues. Residues serine 78 and serine 82 each carry the phosphoserine modification. A Phosphothreonine modification is found at threonine 206. Coiled-coil stretches lie at residues 217–291 (SLEE…DKAR) and 318–348 (LEAR…EEEG). Disordered regions lie at residues 334-361 (LTQK…LVPD), 392-455 (KDLE…SSQE), and 467-505 (LRTE…RPER). Composition is skewed to acidic residues over residues 343–358 (ESEE…EEPL) and 396–410 (DPAE…ESEE). Serine 406 and serine 408 each carry phosphoserine. The segment covering 411–444 (EKAVVEEETLLKEFEERRSLRQKSELNHMAEPVH) has biased composition (basic and acidic residues). Residue lysine 449 forms a Glycyl lysine isopeptide (Lys-Gly) (interchain with G-Cter in SUMO2) linkage. Phosphoserine is present on serine 453. Serine 567 bears the Phosphoserine mark. Citrulline is present on arginine 588. Lysine 732 is covalently cross-linked (Glycyl lysine isopeptide (Lys-Gly) (interchain with G-Cter in SUMO2)).

It belongs to the UTP14 family. Interacts with DHX37. Citrullinated by PADI4.

Its subcellular location is the nucleus. The protein resides in the nucleolus. May be required for ribosome biogenesis. The sequence is that of U3 small nucleolar RNA-associated protein 14 homolog A (UTP14A) from Bos taurus (Bovine).